The following is a 328-amino-acid chain: Phosphate acetyltransferase (328 aa).

This sequence belongs to the phosphate acetyltransferase and butyryltransferase family.

It localises to the cytoplasm. The catalysed reaction is acetyl-CoA + phosphate = acetyl phosphate + CoA. Its pathway is metabolic intermediate biosynthesis; acetyl-CoA biosynthesis; acetyl-CoA from acetate: step 2/2. The polypeptide is Phosphate acetyltransferase (pta) (Staphylococcus aureus (strain COL)).